Here is a 115-residue protein sequence, read N- to C-terminus: Aspartate 1-decarboxylase (115 aa).

Catalysis depends on Ser-25, which acts as the Schiff-base intermediate with substrate; via pyruvic acid. Pyruvic acid (Ser) is present on Ser-25. Thr-57 contacts substrate. Tyr-58 serves as the catalytic Proton donor. Residue 73-75 (GAA) participates in substrate binding.

It belongs to the PanD family. Heterooctamer of four alpha and four beta subunits. Requires pyruvate as cofactor. Post-translationally, is synthesized initially as an inactive proenzyme, which is activated by self-cleavage at a specific serine bond to produce a beta-subunit with a hydroxyl group at its C-terminus and an alpha-subunit with a pyruvoyl group at its N-terminus.

The protein localises to the cytoplasm. The catalysed reaction is L-aspartate + H(+) = beta-alanine + CO2. It functions in the pathway cofactor biosynthesis; (R)-pantothenate biosynthesis; beta-alanine from L-aspartate: step 1/1. In terms of biological role, catalyzes the pyruvoyl-dependent decarboxylation of aspartate to produce beta-alanine. The polypeptide is Aspartate 1-decarboxylase (Kosmotoga olearia (strain ATCC BAA-1733 / DSM 21960 / TBF 19.5.1)).